The following is a 183-amino-acid chain: Oligoribonuclease (183 aa).

The 164-residue stretch at 9–172 (LIWIDLEMTG…DDIRESIEEL (164 aa)) folds into the Exonuclease domain. Tyr-130 is a catalytic residue.

This sequence belongs to the oligoribonuclease family.

Its subcellular location is the cytoplasm. Its function is as follows. 3'-to-5' exoribonuclease specific for small oligoribonucleotides. This chain is Oligoribonuclease, found in Haemophilus ducreyi (strain 35000HP / ATCC 700724).